The following is a 260-amino-acid chain: Snake venom serine protease salmobin (260 aa).

The N-terminal stretch at 1–18 (MVLIKVLANHLILQLSYA) is a signal peptide. Residues 19–24 (QKSSEL) constitute a propeptide that is removed on maturation. Residues 25–251 (VIGGDECNIN…YTDWIQSIIA (227 aa)) enclose the Peptidase S1 domain. 6 disulfide bridges follow: Cys31–Cys165, Cys52–Cys68, Cys102–Cys258, Cys144–Cys212, Cys176–Cys191, and Cys202–Cys227. Catalysis depends on His67, which acts as the Charge relay system. The N-linked (GlcNAc...) asparagine glycan is linked to Asn105. Asp112 serves as the catalytic Charge relay system. N-linked (GlcNAc...) asparagine glycans are attached at residues Asn123 and Asn156. Catalysis depends on Ser206, which acts as the Charge relay system.

The protein belongs to the peptidase S1 family. Snake venom subfamily. In terms of assembly, monomer. Expressed by the venom gland.

It localises to the secreted. In terms of biological role, snake venom serine protease that may act in the hemostasis system of the prey. The protein is Snake venom serine protease salmobin of Gloydius halys (Chinese water mocassin).